A 224-amino-acid chain; its full sequence is C-&gt;U-editing enzyme APOBEC-2 (224 aa).

A disordered region spans residues 1 to 24; the sequence is MAQKEEAAVATEAASQNGEDLENL. Residues Glu-60 and His-98 each coordinate Zn(2+). The 106-residue stretch at 64–169 folds into the CMP/dCMP-type deaminase domain; it reads GRNKTFLCYV…PEIQAALKKL (106 aa). Glu-100 (proton donor) is an active-site residue. Positions 128 and 131 each coordinate Zn(2+).

The protein belongs to the cytidine and deoxycytidylate deaminase family. As to quaternary structure, homotetramer. The cofactor is Zn(2+). Expressed exclusively in heart and skeletal muscle.

The enzyme catalyses cytidine(6666) in apoB mRNA + H2O + H(+) = uridine(6666) in apoB mRNA + NH4(+). Probable C to U editing enzyme whose physiological substrate is not yet known. Does not display detectable apoB mRNA editing. Has a low intrinsic cytidine deaminase activity. May play a role in the epigenetic regulation of gene expression through the process of active DNA demethylation. The sequence is that of C-&gt;U-editing enzyme APOBEC-2 (APOBEC2) from Homo sapiens (Human).